Reading from the N-terminus, the 811-residue chain is Glycerol-3-phosphate acyltransferase (811 aa).

An HXXXXD motif motif is present at residues 309-314 (CHRSHM).

Belongs to the GPAT/DAPAT family.

The protein resides in the cell inner membrane. It catalyses the reaction sn-glycerol 3-phosphate + an acyl-CoA = a 1-acyl-sn-glycero-3-phosphate + CoA. It participates in phospholipid metabolism; CDP-diacylglycerol biosynthesis; CDP-diacylglycerol from sn-glycerol 3-phosphate: step 1/3. The sequence is that of Glycerol-3-phosphate acyltransferase from Colwellia psychrerythraea (strain 34H / ATCC BAA-681) (Vibrio psychroerythus).